The chain runs to 79 residues: Acyl carrier protein (79 aa).

A Carrier domain is found at 2-77 (ADHASKIKDI…DAVAYLEAKV (76 aa)). Residue Ser37 is modified to O-(pantetheine 4'-phosphoryl)serine.

It belongs to the acyl carrier protein (ACP) family. In terms of processing, 4'-phosphopantetheine is transferred from CoA to a specific serine of apo-ACP by AcpS. This modification is essential for activity because fatty acids are bound in thioester linkage to the sulfhydryl of the prosthetic group.

The protein localises to the cytoplasm. The protein operates within lipid metabolism; fatty acid biosynthesis. In terms of biological role, carrier of the growing fatty acid chain in fatty acid biosynthesis. The polypeptide is Acyl carrier protein (Gemmatimonas aurantiaca (strain DSM 14586 / JCM 11422 / NBRC 100505 / T-27)).